Here is a 198-residue protein sequence, read N- to C-terminus: Alpha1-proteinase inhibitor-degradation deficient protein 37 (198 aa).

Residue serine 79 is modified to Phosphoserine.

The protein localises to the cytoplasm. Functionally, involved in ER-associated protein degradation (ERAD). In Saccharomyces cerevisiae (strain ATCC 204508 / S288c) (Baker's yeast), this protein is Alpha1-proteinase inhibitor-degradation deficient protein 37 (ADD37).